A 559-amino-acid polypeptide reads, in one-letter code: Glucose-6-phosphate isomerase (559 aa).

The active-site Proton donor is glutamate 352. Catalysis depends on residues histidine 383 and lysine 511.

It belongs to the GPI family.

The protein resides in the cytoplasm. It catalyses the reaction alpha-D-glucose 6-phosphate = beta-D-fructose 6-phosphate. It participates in carbohydrate biosynthesis; gluconeogenesis. The protein operates within carbohydrate degradation; glycolysis; D-glyceraldehyde 3-phosphate and glycerone phosphate from D-glucose: step 2/4. In terms of biological role, catalyzes the reversible isomerization of glucose-6-phosphate to fructose-6-phosphate. In Chlorobium phaeobacteroides (strain DSM 266 / SMG 266 / 2430), this protein is Glucose-6-phosphate isomerase.